Reading from the N-terminus, the 110-residue chain is DNA-directed RNA polymerase subunit omega (110 aa).

This sequence belongs to the RNA polymerase subunit omega family. As to quaternary structure, the RNAP catalytic core consists of 2 alpha, 1 beta, 1 beta' and 1 omega subunit. When a sigma factor is associated with the core the holoenzyme is formed, which can initiate transcription.

The catalysed reaction is RNA(n) + a ribonucleoside 5'-triphosphate = RNA(n+1) + diphosphate. In terms of biological role, promotes RNA polymerase assembly. Latches the N- and C-terminal regions of the beta' subunit thereby facilitating its interaction with the beta and alpha subunits. The chain is DNA-directed RNA polymerase subunit omega from Mycobacterium leprae (strain Br4923).